Reading from the N-terminus, the 62-residue chain is Venom peptide SjAPI-2 (62 aa).

Disulfide bonds link Cys4-Cys40, Cys14-Cys36, Cys18-Cys32, Cys22-Cys60, and Cys42-Cys54. Residues 4–60 (CRISGEVFTWCGTTCPLTCENFRNPPKHCPQGCFVGCMCRRGLVRHRNGRCVRPPRC) enclose the TIL domain.

The protein belongs to the serine protease inhibitor-like (TIL domain-containing) family. As to expression, expressed by the venom gland.

Its subcellular location is the secreted. Its function is as follows. Serine protease inhibitor. The protein is Venom peptide SjAPI-2 of Scorpiops jendeki (Scorpion).